Consider the following 3078-residue polypeptide: Homeobox-like protein HDP1 (3078 aa).

10 disordered regions span residues 1–29 (MKRG…DNSN), 59–164 (LHNS…INDN), 203–306 (SKRK…NIGK), 949–980 (NAEI…QDEN), 1323–1390 (DEDS…KDRK), 1415–1445 (SSSN…NNKN), 1939–2046 (KVND…QDKF), 2115–2216 (TNES…QYNY), 2599–2637 (AYMN…DDNI), and 2959–3019 (QQNN…NNGP). Polar residues predominate over residues 14–29 (CPSNGMASSQRNDNSN). A compositionally biased stretch (basic and acidic residues) spans 59 to 84 (LHNSSSRESKDMKLSEEPRHINEKCI). Low complexity-rich tracts occupy residues 85–94 (NDNNKINNNN) and 114–127 (NNNN…TKNN). Composition is skewed to polar residues over residues 128–137 (IFFQTNNPDT), 148–157 (KQENTSSSLH), 209–229 (NSNN…NNIT), 237–252 (TSSI…NTVH), and 949–960 (NAEIHESNSPNH). The span at 1368 to 1380 (RKNKINRGSKGKH) shows a compositional bias: basic residues. A compositionally biased stretch (low complexity) spans 1415–1433 (SSSNYEEGNSSSNEENNIS). A compositionally biased stretch (polar residues) spans 1434–1445 (TDKNISNTNNKN). Over residues 1939-1993 (KVNDSNNSNDANEGNNANYSNDSSNTNNNTSSSTNNSNNNTSCSSQNTTTSSENN) the composition is skewed to low complexity. 2 stretches are compositionally biased toward basic and acidic residues: residues 2012–2021 (KDTQKEKNNL) and 2029–2046 (YEDR…QDKF). Polar residues predominate over residues 2115–2126 (TNESIKTNSDQN). The span at 2139-2160 (MNNDNYNSSYDNVHNDNDNNMV) shows a compositional bias: low complexity. The segment covering 2163–2177 (DSSRQDNMEKQKSGE) has biased composition (basic and acidic residues). Residues 2192–2201 (NDNDNDDNND) show a composition bias toward acidic residues. 3 stretches are compositionally biased toward low complexity: residues 2202–2216 (NDNN…QYNY), 2602–2630 (NDNN…YSYD), and 2959–2989 (QQNN…QKNN). Residues 2990–3006 (LSEVQVSNINTPSSYNI) show a composition bias toward polar residues. Positions 2991-3078 (SEVQVSNINT…GKRRKNEDNK (88 aa)) are DNA-binding.

As to quaternary structure, homodimer.

The protein localises to the nucleus. It is found in the chromosome. Transcriptional regulator which binds to the DNA motifs 5'-GTGCACAC-3' (motif A) and 5'-[GTA]TGTA[CT][GA]TAC-3' (motif B) of genes essential for early gametocyte development, including those critical for the expansion of the inner membrane complex (IMC). The chain is Homeobox-like protein HDP1 from Plasmodium falciparum (isolate NF54).